A 113-amino-acid chain; its full sequence is Large ribosomal subunit protein bL19 (113 aa).

It belongs to the bacterial ribosomal protein bL19 family.

Its function is as follows. This protein is located at the 30S-50S ribosomal subunit interface and may play a role in the structure and function of the aminoacyl-tRNA binding site. This is Large ribosomal subunit protein bL19 from Mycolicibacterium smegmatis (strain ATCC 700084 / mc(2)155) (Mycobacterium smegmatis).